We begin with the raw amino-acid sequence, 228 residues long: 7-cyano-7-deazaguanine synthase (228 aa).

11 to 21 (LSGGLDSATVL) contributes to the ATP binding site. Zn(2+) is bound by residues Cys191, Cys201, Cys204, and Cys207.

Belongs to the QueC family. The cofactor is Zn(2+).

It catalyses the reaction 7-carboxy-7-deazaguanine + NH4(+) + ATP = 7-cyano-7-deazaguanine + ADP + phosphate + H2O + H(+). The protein operates within purine metabolism; 7-cyano-7-deazaguanine biosynthesis. Functionally, catalyzes the ATP-dependent conversion of 7-carboxy-7-deazaguanine (CDG) to 7-cyano-7-deazaguanine (preQ(0)). This is 7-cyano-7-deazaguanine synthase from Magnetococcus marinus (strain ATCC BAA-1437 / JCM 17883 / MC-1).